The sequence spans 423 residues: uncharacterized protein (423 aa).

It belongs to the asfivirus E423R family.

It localises to the virion. This is an uncharacterized protein from African swine fever virus (isolate Tick/Malawi/Lil 20-1/1983) (ASFV).